We begin with the raw amino-acid sequence, 653 residues long: Probable potassium transport system protein Kup (653 aa).

12 helical membrane-spanning segments follow: residues 37-57, 79-99, 134-154, 168-188, 196-216, 243-263, 278-298, 320-340, 368-388, 397-417, 426-446, and 450-470; these read ALLA…SPLY, VLSL…LLLV, ITLG…TPAI, AVFD…LFLV, IGAV…GLGV, LHGF…EALY, WFSM…ALLL, LVAL…AGVF, IYLP…VLGF, AYGI…YVVA, WVAI…FGAN, and VADG…LMTT.

The protein belongs to the HAK/KUP transporter (TC 2.A.72) family.

The protein resides in the cell inner membrane. The enzyme catalyses K(+)(in) + H(+)(in) = K(+)(out) + H(+)(out). In terms of biological role, transport of potassium into the cell. Likely operates as a K(+):H(+) symporter. The polypeptide is Probable potassium transport system protein Kup (Myxococcus xanthus (strain DK1622)).